We begin with the raw amino-acid sequence, 162 residues long: Ribosome maturation factor RimM (162 aa).

The PRC barrel domain maps to 91–162 (DGSFYIDDLI…LIDVVIIEGM (72 aa)).

Belongs to the RimM family. In terms of assembly, binds ribosomal protein uS19.

It localises to the cytoplasm. Its function is as follows. An accessory protein needed during the final step in the assembly of 30S ribosomal subunit, possibly for assembly of the head region. Essential for efficient processing of 16S rRNA. May be needed both before and after RbfA during the maturation of 16S rRNA. It has affinity for free ribosomal 30S subunits but not for 70S ribosomes. The protein is Ribosome maturation factor RimM of Finegoldia magna (strain ATCC 29328 / DSM 20472 / WAL 2508) (Peptostreptococcus magnus).